The primary structure comprises 160 residues: SsrA-binding protein (160 aa).

The protein belongs to the SmpB family.

The protein localises to the cytoplasm. Its function is as follows. Required for rescue of stalled ribosomes mediated by trans-translation. Binds to transfer-messenger RNA (tmRNA), required for stable association of tmRNA with ribosomes. tmRNA and SmpB together mimic tRNA shape, replacing the anticodon stem-loop with SmpB. tmRNA is encoded by the ssrA gene; the 2 termini fold to resemble tRNA(Ala) and it encodes a 'tag peptide', a short internal open reading frame. During trans-translation Ala-aminoacylated tmRNA acts like a tRNA, entering the A-site of stalled ribosomes, displacing the stalled mRNA. The ribosome then switches to translate the ORF on the tmRNA; the nascent peptide is terminated with the 'tag peptide' encoded by the tmRNA and targeted for degradation. The ribosome is freed to recommence translation, which seems to be the essential function of trans-translation. The polypeptide is SsrA-binding protein (Salmonella agona (strain SL483)).